Consider the following 130-residue polypeptide: Sirohydrochlorin cobaltochelatase (130 aa).

His-12 (proton acceptor) is an active-site residue. His-12 is a Co(2+) binding site. His-12 provides a ligand contact to Ni(2+). Substrate-binding positions include Glu-48 and 73–78 (LASGVH). His-78 lines the Co(2+) pocket. Residue His-78 coordinates Ni(2+).

The protein belongs to the CbiX family. CbiXS subfamily. In terms of assembly, homotetramer; dimer of dimers.

The catalysed reaction is Co-sirohydrochlorin + 2 H(+) = sirohydrochlorin + Co(2+). The enzyme catalyses Ni-sirohydrochlorin + 2 H(+) = sirohydrochlorin + Ni(2+). It functions in the pathway cofactor biosynthesis; adenosylcobalamin biosynthesis; cob(II)yrinate a,c-diamide from sirohydrochlorin (anaerobic route): step 1/10. Catalyzes the insertion of Co(2+) into sirohydrochlorin as part of the anaerobic pathway to cobalamin biosynthesis (Potential). Involved in the biosynthesis of the unique nickel-containing tetrapyrrole coenzyme F430, the prosthetic group of methyl-coenzyme M reductase (MCR), which plays a key role in methanogenesis and anaerobic methane oxidation. Catalyzes the insertion of Ni(2+) into sirohydrochlorin to yield Ni-sirohydrochlorin. This Methanosarcina acetivorans (strain ATCC 35395 / DSM 2834 / JCM 12185 / C2A) protein is Sirohydrochlorin cobaltochelatase.